A 435-amino-acid chain; its full sequence is Cytokine-dependent hematopoietic cell linker (435 aa).

Tyr-69 and Tyr-96 each carry phosphotyrosine; by LYN. The tract at residues 155–303 (KINKTPLPPP…PDPTKPDEKD (149 aa)) is disordered. A mediates interaction with PLCG1; essential for BCR signaling; involved in restoration of BCR-induced calcium response and ERK2 and JNK2 activation in BLNK-deficient cells expressing LAT region spans residues 160-165 (PLPPPR). Residues 178-182 (PPAPP) are mediates interaction with LAT, GRB2, and FGR; involved in translocation to the glycolipid-enriched microdomain and restoration of BCR-induced calcium response in BLNK-deficient DT40 cells expressing LAT. The segment covering 226 to 249 (PESSCPSSNQNTQKSPPAIASSSY) has biased composition (polar residues). A compositionally biased stretch (basic and acidic residues) spans 290–303 (NSEKPDPTKPDEKD). One can recognise an SH2 domain in the interval 309–418 (WYIGEYSRQA…RKQCYLTQPL (110 aa)).

When phosphorylated, interacts with PLCG1, PLCG2, GRB2, VAV and LAT. Associated with a tyrosine-phosphorylated polypeptide (p92) in response to immunoreceptor stimulation. Interacts with LBR and AGO2. Interacts with FGR. Part of a complex consisting of CLNK, SKAP1 and FYB1. Interacts (via SH2 domain) with FYB1; this interaction allows SKAP1 and FYB1 to promote tyrosine phosphorylation of CLNK by LYN. Interacts (via SH2 domain) with MAP4K1. Post-translationally, tyrosine-phosphorylated upon BCR cross-linking. Tyrosine phosphorylation at both Tyr-69 and Tyr-96 are required for BCR-induced calcium response and are essential to restore PLCG2-mediated signaling in BLNK-deficient DT40 cells, but this phosphorylation is dispensable in cells expressing LAT. Interacts with the SH2 domain of PLCG1 via phosphorylated Tyr-96. Tyrosine phosphorylation is increased when complexed with SKAP1 and FYB1. In terms of tissue distribution, expressed in T-cells, mast cells, natural killer and natural killer T cells (at protein level). Expressed in cytokine-stimulated hemopoietic cells.

Its subcellular location is the cytoplasm. An adapter protein which plays a role in the regulation of immunoreceptor signaling, including PLC-gamma-mediated B-cell antigen receptor (BCR) signaling and FC-epsilon R1-mediated mast cell degranulation. Together with FGR, it acts as a negative regulator of natural killer cell-activating receptors and inhibits interferon-gamma production. Acts as a positive regulator of both T-cell receptor and natural killer T (NKT) cell receptor signaling in CD4-positive NKT cells. Together with MAP4K1, it enhances CD3-triggered activation of T-cells and subsequent IL2 production. May be involved in tumor necrosis factor induced cell death by promoting reactive oxidative species generation, and MLKL oligomerization, ultimately leading to necrosis. Involved in phosphorylation of LAT. May be involved in high affinity immunoglobulin epsilon receptor signaling in mast cells. The sequence is that of Cytokine-dependent hematopoietic cell linker (Clnk) from Mus musculus (Mouse).